The sequence spans 192 residues: 7-methyl-GTP pyrophosphatase (192 aa).

Aspartate 69 acts as the Proton acceptor in catalysis.

The protein belongs to the Maf family. YceF subfamily. The cofactor is a divalent metal cation.

It is found in the cytoplasm. The catalysed reaction is N(7)-methyl-GTP + H2O = N(7)-methyl-GMP + diphosphate + H(+). Its function is as follows. Nucleoside triphosphate pyrophosphatase that hydrolyzes 7-methyl-GTP (m(7)GTP). May have a dual role in cell division arrest and in preventing the incorporation of modified nucleotides into cellular nucleic acids. The polypeptide is 7-methyl-GTP pyrophosphatase (Pseudomonas fluorescens (strain ATCC BAA-477 / NRRL B-23932 / Pf-5)).